A 339-amino-acid polypeptide reads, in one-letter code: Probable G-protein coupled receptor 33 (339 aa).

Residues 1–30 (MDRVNSSGHVISVSPSLTNSTGVPTPAPKA) lie on the Extracellular side of the membrane. N5 and N19 each carry an N-linked (GlcNAc...) asparagine glycan. A helical membrane pass occupies residues 31-53 (IIAAALFMSFIVGTISNGLYLWM). Topologically, residues 54–64 (LKFKMQRTVNT) are cytoplasmic. The helical transmembrane segment at 65–86 (LLFFHLILSYFISTLILPFMAT) threads the bilayer. Over 87 to 103 (SFLQDNHWAFGSVLCKV) the chain is Extracellular. Residues C101 and C179 are joined by a disulfide bond. A helical membrane pass occupies residues 104–124 (FNSTLSVSMFASVFFLSAISV). Over 125–143 (DRYHLTLHPVWSQQHRTPR) the chain is Cytoplasmic. Residues 144–165 (WASRIALRIWILATILSIPYLV) traverse the membrane as a helical segment. The Extracellular portion of the chain corresponds to 166–209 (FRETHDDHKGRIKCQNNYIVGTNWESSEHQTLGQWIHAACFGRR). Residues 210–230 (FLLGFLLPFLVIVFCYKRVAT) traverse the membrane as a helical segment. Residues 231 to 246 (KMKDKGLFKSSKPFKV) are Cytoplasmic-facing. A helical transmembrane segment spans residues 247–268 (MLTAVVSFFVCWMPYHVHSGLV). At 269–283 (LTKSQPLPSQLTLGL) the chain is on the extracellular side. A helical transmembrane segment spans residues 284 to 303 (AVVTISFNTVVSPILYLFTG). At 304–339 (ENFEVFKKSILALFKSTFSDSSATERTQTLNSETEI) the chain is on the cytoplasmic side.

It belongs to the G-protein coupled receptor 1 family.

It localises to the cell membrane. Functionally, orphan receptor; could be a chemoattractant receptor. The protein is Probable G-protein coupled receptor 33 (Gpr33) of Rattus rattus (Black rat).